Reading from the N-terminus, the 277-residue chain is Small ribosomal subunit protein uS3 (277 aa).

The region spanning 43–111 (IRELMSKGMD…QIQLNILEVK (69 aa)) is the KH type-2 domain. Positions 217 to 277 (AAQQAAAPSS…AEANNAEGGK (61 aa)) are disordered. Residues 245-258 (NDRNDRGGRRERDS) show a composition bias toward basic and acidic residues. Positions 259–277 (AAAPQQNSAAEANNAEGGK) are enriched in low complexity.

This sequence belongs to the universal ribosomal protein uS3 family. As to quaternary structure, part of the 30S ribosomal subunit. Forms a tight complex with proteins S10 and S14.

Its function is as follows. Binds the lower part of the 30S subunit head. Binds mRNA in the 70S ribosome, positioning it for translation. This is Small ribosomal subunit protein uS3 from Kocuria rhizophila (strain ATCC 9341 / DSM 348 / NBRC 103217 / DC2201).